The following is a 519-amino-acid chain: Pleckstrin homology domain-containing family A member 8 (519 aa).

Residues 1–93 form the PH domain; that stretch reads MEGVLYKWTN…WLVALGSAKA (93 aa). A Phosphothreonine modification is found at Thr-139. Ser-145 is modified (phosphoserine). Thr-153 is modified (phosphothreonine). The tract at residues 310–519 is glycolipid transfer protein homology domain; sequence TFFSTMNTSF…VHGLESDEVV (210 aa).

In terms of assembly, homodimer. Interacts with ARF1; the interaction together with phosphatidylinositol 4-phosphate binding is required for FAPP2 GlcCer transfer ability. As to expression, expressed in kidney cell lines.

It localises to the golgi apparatus. Its subcellular location is the trans-Golgi network membrane. It is found in the membrane. Cargo transport protein that is required for apical transport from the Golgi complex. Transports AQP2 from the trans-Golgi network (TGN) to sites of AQP2 phosphorylation. Mediates the non-vesicular transport of glucosylceramide (GlcCer) from the trans-Golgi network (TGN) to the plasma membrane and plays a pivotal role in the synthesis of complex glycosphingolipids. Binding of both phosphatidylinositol 4-phosphate (PIP) and ARF1 are essential for the GlcCer transfer ability. Also required for primary cilium formation, possibly by being involved in the transport of raft lipids to the apical membrane, and for membrane tubulation. The chain is Pleckstrin homology domain-containing family A member 8 (PLEKHA8) from Homo sapiens (Human).